We begin with the raw amino-acid sequence, 320 residues long: Olfactory receptor 52W1 (320 aa).

Residues Met1–Thr30 lie on the Extracellular side of the membrane. A glycan (N-linked (GlcNAc...) asparagine) is linked at Asn8. A helical transmembrane segment spans residues Trp31–Pro51. Residues Ala52 to Thr59 lie on the Cytoplasmic side of the membrane. A helical transmembrane segment spans residues Leu60–Thr80. The Extracellular segment spans residues Ser81 to Val104. Residues Gln105–Cys125 form a helical membrane-spanning segment. Over Asp126–Ala144 the chain is Cytoplasmic. A helical transmembrane segment spans residues Cys145 to Pro165. Residues Leu166–Asn201 lie on the Extracellular side of the membrane. Residues Leu202–Ser222 form a helical membrane-spanning segment. At Tyr223 to Ala242 the chain is on the cytoplasmic side. Residues Phe243 to Ser263 form a helical membrane-spanning segment. Topologically, residues Tyr264–His279 are extracellular. A helical membrane pass occupies residues Ile280–Ala300. Residues Arg301–Leu320 lie on the Cytoplasmic side of the membrane.

This sequence belongs to the G-protein coupled receptor 1 family.

The protein localises to the cell membrane. Its function is as follows. Odorant receptor. This Homo sapiens (Human) protein is Olfactory receptor 52W1 (OR52W1).